A 350-amino-acid chain; its full sequence is DNA-directed RNA polymerase subunit alpha (350 aa).

Residues 1-226 (MLISQRPTLS…ELFGLARELN (226 aa)) are alpha N-terminal domain (alpha-NTD). Residues 241-350 (ADQAAHFALP…NQDYAETEQL (110 aa)) form an alpha C-terminal domain (alpha-CTD) region. The disordered stretch occupies residues 328–350 (GTWNSDAGYDLEDNQDYAETEQL). Positions 336-350 (YDLEDNQDYAETEQL) are enriched in acidic residues.

The protein belongs to the RNA polymerase alpha chain family. Homodimer. The RNAP catalytic core consists of 2 alpha, 1 beta, 1 beta' and 1 omega subunit. When a sigma factor is associated with the core the holoenzyme is formed, which can initiate transcription.

The catalysed reaction is RNA(n) + a ribonucleoside 5'-triphosphate = RNA(n+1) + diphosphate. DNA-dependent RNA polymerase catalyzes the transcription of DNA into RNA using the four ribonucleoside triphosphates as substrates. In Mycolicibacterium vanbaalenii (strain DSM 7251 / JCM 13017 / BCRC 16820 / KCTC 9966 / NRRL B-24157 / PYR-1) (Mycobacterium vanbaalenii), this protein is DNA-directed RNA polymerase subunit alpha.